Reading from the N-terminus, the 682-residue chain is Methionine synthase reductase (682 aa).

One can recognise a Flavodoxin-like domain in the interval Phe-4 to Phe-147. FMN is bound at residue Leu-93–Phe-124. The FAD-binding FR-type domain maps to Thr-271–Pro-516. NADP(+) is bound at residue Lys-293. FAD is bound by residues Arg-455–Ser-458 and Gly-488–Thr-491. NADP(+) contacts are provided by residues Arg-607–Gln-609 and Asp-643. Trp-681 provides a ligand contact to FAD.

It depends on FAD as a cofactor. The cofactor is FMN.

It catalyses the reaction 2 methylcob(III)alamin-[methionine synthase] + 2 S-adenosyl-L-homocysteine + NADP(+) + H(+) = 2 cob(II)alamin-[methionine synthase] + 2 S-adenosyl-L-methionine + NADPH. Involved in the reductive regeneration of cob(I)alamin cofactor required for the maintenance of methionine synthase in a functional state. This chain is Methionine synthase reductase, found in Caenorhabditis elegans.